Consider the following 106-residue polypeptide: Iron-sulfur cluster assembly protein CyaY (106 aa).

The protein belongs to the frataxin family.

Involved in iron-sulfur (Fe-S) cluster assembly. May act as a regulator of Fe-S biogenesis. In Cronobacter sakazakii (strain ATCC BAA-894) (Enterobacter sakazakii), this protein is Iron-sulfur cluster assembly protein CyaY.